Reading from the N-terminus, the 930-residue chain is A disintegrin and metalloproteinase with thrombospondin motifs 5 (930 aa).

Residues 1-16 (MLLGWASLLLCAFRLP) form the signal peptide. Residues 17–261 (LAAVGPAATP…PQTWWRRRRR (245 aa)) constitute a propeptide that is removed on maturation. Disordered regions lie at residues 24–69 (ATPA…QRRR) and 206–231 (RASCETPASTPEAHEHAPAHSNPSGR). The segment covering 31-42 (AGQPPTAAAAAQ) has biased composition (low complexity). Basic and acidic residues predominate over residues 46–59 (RQGEEVQERAEPPG). The Cysteine switch motif lies at 207–214 (ASCETPAS). C209 provides a ligand contact to Zn(2+). A Peptidase M12B domain is found at 267–476 (RQVELLLVAD…GHGNCLLDLP (210 aa)). 8 disulfide bridges follow: C342–C394, C371–C376, C388–C471, C426–C455, C497–C519, C508–C529, C514–C548, and C542–C553. Zn(2+) is bound at residue H410. Residue E411 is part of the active site. 2 residues coordinate Zn(2+): H414 and H420. The 82-residue stretch at 485 to 566 (ELPGQTYDAT…TKKKYYSTSS (82 aa)) folds into the Disintegrin domain. N498 carries an N-linked (GlcNAc...) asparagine glycan. One can recognise a TSP type-1 1 domain in the interval 567 to 622 (HGNWGSWGSWGQCSRSCGGGVQFAYRHCNNPAPRNNGRYCTGKRAIYRSCSLMPCP). C-linked (Man) tryptophan glycosylation is found at W570 and W573. Cystine bridges form between C579/C616, C583/C621, and C594/C606. Residue S582 is glycosylated (O-linked (Fuc...) serine). N-linked (GlcNAc...) asparagine glycans are attached at residues N728, N802, and N807. Residues 732–874 (TKIVGTFNKK…HGSNKVGSHT (143 aa)) are spacer. Residues 875 to 929 (SQPQWVTGPWLACSRTCDTGWHTRTVQCQDGNRKLAKGCPLSQRPSAFKQCLLKK) form the TSP type-1 2 domain.

It depends on Zn(2+) as a cofactor. The precursor is cleaved by furin and PCSK7 outside of the cell. Post-translationally, glycosylated. Can be O-fucosylated by POFUT2 on a serine or a threonine residue found within the consensus sequence C1-X(2)-(S/T)-C2-G of the TSP type-1 repeat domains where C1 and C2 are the first and second cysteine residue of the repeat, respectively. Fucosylated repeats can then be further glycosylated by the addition of a beta-1,3-glucose residue by the glucosyltransferase, B3GALTL. Fucosylation mediates the efficient secretion of ADAMTS family members. Can also be C-glycosylated with one or two mannose molecules on tryptophan residues within the consensus sequence W-X-X-W of the TPRs, and N-glycosylated. These other glycosylations can also facilitate secretion. Expressed at low level in placenta primarily but also detected in heart and brain, cervix, uterus, bladder, esophagus, rib cartilage, chondroblastoma, fibrous tissue and a joint capsule from an arthritic patient.

It is found in the secreted. The protein localises to the extracellular space. The protein resides in the extracellular matrix. Its function is as follows. Metalloproteinase that plays an important role in connective tissue organization, development, inflammation and cell migration. Extracellular matrix (ECM) degrading enzyme that show proteolytic activity toward the hyalectan group of chondroitin sulfate proteoglycans (CSPGs) including ACAN, VCAN, BCAN and NCAN. Cleavage within the hyalectans occurs at Glu-Xaa recognition motifs. Plays a role in embryonic development, including limb and cardiac morphogenesis, and skeletal muscle development through its VCAN remodeling properties. Cleaves VCAN in the pericellular matrix surrounding myoblasts, facilitating myoblast contact and fusion which is required for skeletal muscle development and regeneration. Participates in development of brown adipose tissue and browning of white adipose tissue. Plays an important role for T-lymphocyte migration from draining lymph nodes following viral infection. This is A disintegrin and metalloproteinase with thrombospondin motifs 5 (ADAMTS5) from Homo sapiens (Human).